Consider the following 87-residue polypeptide: HssA/B-like protein 18 (87 aa).

This sequence belongs to the hssA/B family.

The polypeptide is HssA/B-like protein 18 (hssl18) (Dictyostelium discoideum (Social amoeba)).